The primary structure comprises 143 residues: Large ribosomal subunit protein uL11 (143 aa).

The protein belongs to the universal ribosomal protein uL11 family. As to quaternary structure, part of the ribosomal stalk of the 50S ribosomal subunit. Interacts with L10 and the large rRNA to form the base of the stalk. L10 forms an elongated spine to which L12 dimers bind in a sequential fashion forming a multimeric L10(L12)X complex. In terms of processing, one or more lysine residues are methylated.

In terms of biological role, forms part of the ribosomal stalk which helps the ribosome interact with GTP-bound translation factors. In Bordetella pertussis (strain Tohama I / ATCC BAA-589 / NCTC 13251), this protein is Large ribosomal subunit protein uL11.